Reading from the N-terminus, the 274-residue chain is MLKFKNRIVEKRVKGAEKASFGGPVLLYRTLRKVTKLYKYITDKKSFPILVTSLFALFNPNSVLAADKYSNFEELKENESPLSYNILTTDVDRRVLILAPHGGGIEGGTSELARELSKSYSAYLFEGLRIPGASELHITSTNFDEPQALDLLSKHDLTISIHGYASSKKHTLVGGTDREKAAKITSLLTDAGFSAELLSEDSRLAGTNEQNIANKNSTGMSIQLEISTEQRREMFNTFTLAGRNGTQNQVFYDYIAVLTKFINENVYCMAGVAP.

It belongs to the UPF0714 family.

The sequence is that of SPbeta prophage-derived UPF0714 protein YoqZ (yoqZ) from Bacillus subtilis (strain 168).